The primary structure comprises 104 residues: Large ribosomal subunit protein uL24 (104 aa).

Belongs to the universal ribosomal protein uL24 family. In terms of assembly, part of the 50S ribosomal subunit.

Its function is as follows. One of two assembly initiator proteins, it binds directly to the 5'-end of the 23S rRNA, where it nucleates assembly of the 50S subunit. In terms of biological role, one of the proteins that surrounds the polypeptide exit tunnel on the outside of the subunit. The sequence is that of Large ribosomal subunit protein uL24 from Shewanella woodyi (strain ATCC 51908 / MS32).